Here is a 227-residue protein sequence, read N- to C-terminus: Ornithine decarboxylase antizyme 1 (227 aa).

It belongs to the ODC antizyme family. Interacts with ODC1 and thereby sterically blocks ODC homodimerization. Forms a ternary complex with PSMB4 and OAZ1 before PSMB4 is incorporated into the 20S proteasome. Interacts with AZIN2; this interaction disrupts the interaction between the antizyme and ODC1. Interacts with FAM171A1.

In terms of biological role, ornithine decarboxylase (ODC) antizyme protein that negatively regulates ODC activity and intracellular polyamine biosynthesis and uptake in response to increased intracellular polyamine levels. Binds to ODC monomers, inhibiting the assembly of the functional ODC homodimer, and targets the monomers for ubiquitin-independent proteolytic destruction by the 26S proteasome. Triggers ODC degradation by inducing the exposure of a cryptic proteasome-interacting surface of ODC. Stabilizes AZIN2 by interfering with its ubiquitination. Also inhibits cellular uptake of polyamines by inactivating the polyamine uptake transporter. SMAD1/OAZ1/PSMB4 complex mediates the degradation of the CREBBP/EP300 repressor SNIP1. Involved in the translocation of AZIN2 from ER-Golgi intermediate compartment (ERGIC) to the cytosol. In Rattus norvegicus (Rat), this protein is Ornithine decarboxylase antizyme 1 (Oaz1).